Consider the following 278-residue polypeptide: Urease accessory protein UreD (278 aa).

It belongs to the UreD family. As to quaternary structure, ureD, UreF and UreG form a complex that acts as a GTP-hydrolysis-dependent molecular chaperone, activating the urease apoprotein by helping to assemble the nickel containing metallocenter of UreC. The UreE protein probably delivers the nickel.

It is found in the cytoplasm. Required for maturation of urease via the functional incorporation of the urease nickel metallocenter. This Blochmanniella pennsylvanica (strain BPEN) protein is Urease accessory protein UreD.